We begin with the raw amino-acid sequence, 154 residues long: Superoxide dismutase [Cu-Zn] (154 aa).

The Cu cation site is built by H47, H49, and H64. A disulfide bond links C58 and C147. Residues H64, H72, H81, and D84 each contribute to the Zn(2+) site. Position 121 (H121) interacts with Cu cation. A compositionally biased stretch (basic and acidic residues) spans 125-137 (DDLGRSEHPESKK). The interval 125 to 144 (DDLGRSEHPESKKTGNAGAR) is disordered. R144 contributes to the substrate binding site.

The protein belongs to the Cu-Zn superoxide dismutase family. As to quaternary structure, homodimer. Cu cation is required as a cofactor. It depends on Zn(2+) as a cofactor.

The protein localises to the cytoplasm. It carries out the reaction 2 superoxide + 2 H(+) = H2O2 + O2. Its function is as follows. Destroys radicals which are normally produced within the cells and which are toxic to biological systems. The polypeptide is Superoxide dismutase [Cu-Zn] (sodC) (Aspergillus oryzae (strain ATCC 42149 / RIB 40) (Yellow koji mold)).